The chain runs to 146 residues: Leghemoglobin alpha (146 aa).

A Globin domain is found at 3–146; that stretch reads AFTEKQEALV…LAAAIKKAYA (144 aa). Nitrated tyrosine is present on residues tyrosine 26 and tyrosine 31. A heme b-binding site is contributed by serine 46. Phosphoserine is present on serine 46. Histidine 62 serves as a coordination point for O2. The heme b site is built by histidine 93 and lysine 96. The residue at position 134 (tyrosine 134) is a Nitrated tyrosine.

This sequence belongs to the plant globin family. Monomer. Post-translationally, nitrated mainly at Tyr-31 and, to a lower extent, at Tyr-26 and Tyr-134, in effective nodules and particularly in hypoxic conditions; this mechanism may play a protective role in the symbiosis by buffering toxic peroxynitrite NO(2)(-). Nitration level decrease during nodule senescence. In terms of processing, phosphorylation at Ser-46 disrupts the molecular environment of its porphyrin ring oxygen binding pocket, thus leading to a reduced oxygen consumption and to the delivery of oxygen O(2) to symbiosomes. In terms of tissue distribution, root nodules.

It is found in the cytoplasm. Its subcellular location is the cytosol. The protein localises to the nucleus. Its function is as follows. Leghemoglobin that reversibly binds oxygen O(2) through a pentacoordinated heme iron. In root nodules, facilitates the diffusion of oxygen to the bacteroids while preventing the bacterial nitrogenase from being inactivated by buffering dioxygen, nitric oxide and carbon monoxide, and promoting the formation of reactive oxygen species (ROS, e.g. H(2)O(2)). This role is essential for symbiotic nitrogen fixation (SNF). This is Leghemoglobin alpha from Phaseolus vulgaris (Kidney bean).